We begin with the raw amino-acid sequence, 557 residues long: Potassium-transporting ATPase potassium-binding subunit (557 aa).

12 helical membrane-spanning segments follow: residues Gly-5–Ser-25, Leu-63–Gly-83, Gly-132–Ile-152, Leu-170–Ile-190, Phe-253–Val-273, Leu-283–Val-303, Val-329–Ala-349, Ala-356–Val-376, Gly-379–Gly-399, Leu-416–Met-436, Leu-484–Ala-504, and Leu-526–Ala-546.

It belongs to the KdpA family. As to quaternary structure, the system is composed of three essential subunits: KdpA, KdpB and KdpC.

Its subcellular location is the cell inner membrane. Functionally, part of the high-affinity ATP-driven potassium transport (or Kdp) system, which catalyzes the hydrolysis of ATP coupled with the electrogenic transport of potassium into the cytoplasm. This subunit binds the periplasmic potassium ions and delivers the ions to the membrane domain of KdpB through an intramembrane tunnel. The sequence is that of Potassium-transporting ATPase potassium-binding subunit from Escherichia coli O81 (strain ED1a).